Consider the following 508-residue polypeptide: Glycerol kinase (508 aa).

T15 serves as a coordination point for ADP. Positions 15, 16, and 17 each coordinate ATP. Residue T15 coordinates sn-glycerol 3-phosphate. ADP is bound at residue R19. The sn-glycerol 3-phosphate site is built by R85, E86, Y138, and D251. Glycerol contacts are provided by R85, E86, Y138, D251, and Q252. ADP contacts are provided by T273, G317, and G419. 3 residues coordinate ATP: T273, G317, and G419.

Belongs to the FGGY kinase family.

The catalysed reaction is glycerol + ATP = sn-glycerol 3-phosphate + ADP + H(+). It functions in the pathway polyol metabolism; glycerol degradation via glycerol kinase pathway; sn-glycerol 3-phosphate from glycerol: step 1/1. With respect to regulation, inhibited by fructose 1,6-bisphosphate (FBP). In terms of biological role, key enzyme in the regulation of glycerol uptake and metabolism. Catalyzes the phosphorylation of glycerol to yield sn-glycerol 3-phosphate. This is Glycerol kinase from Mycoplasma pneumoniae (strain ATCC 29342 / M129 / Subtype 1) (Mycoplasmoides pneumoniae).